A 366-amino-acid chain; its full sequence is Ribosomal RNA large subunit methyltransferase M (366 aa).

S-adenosyl-L-methionine contacts are provided by residues S188, 221-224 (CPGG), D240, D260, and D277. The active-site Proton acceptor is the K306.

It belongs to the class I-like SAM-binding methyltransferase superfamily. RNA methyltransferase RlmE family. RlmM subfamily. In terms of assembly, monomer.

It is found in the cytoplasm. It catalyses the reaction cytidine(2498) in 23S rRNA + S-adenosyl-L-methionine = 2'-O-methylcytidine(2498) in 23S rRNA + S-adenosyl-L-homocysteine + H(+). Catalyzes the 2'-O-methylation at nucleotide C2498 in 23S rRNA. This chain is Ribosomal RNA large subunit methyltransferase M, found in Salmonella dublin (strain CT_02021853).